Here is a 220-residue protein sequence, read N- to C-terminus: Endonuclease NucS (220 aa).

Belongs to the NucS endonuclease family.

Its subcellular location is the cytoplasm. Cleaves both 3' and 5' ssDNA extremities of branched DNA structures. This chain is Endonuclease NucS, found in Mycobacterium leprae (strain TN).